The primary structure comprises 226 residues: Movement and silencing protein TGBp1 (226 aa).

The region spanning 1–138 is the (+)RNA virus helicase ATP-binding domain; sequence MDILIISLKS…IASCGFDFET (138 aa). Residues 139–226 form the (+)RNA virus helicase C-terminal domain; it reads NSQEEGHLEV…KGLTYVRAGT (88 aa).

This sequence belongs to the Tymovirales TGBp1 protein family. In terms of assembly, homodimer and homooligomer. Interacts with capsid protein. Interacts with host AGO1; this interaction targets the host protein for degradation, thereby suppressing the antiviral RNA silencing.

The protein resides in the host cytoplasm. In terms of biological role, transports viral genome to neighboring plant cells directly through plasmosdesmata, without any budding. The movement protein allows efficient cell to cell propagation, by bypassing the host cell wall barrier. Increases plasmodesma size exclusion limit. Acts as a suppressor of RNA-mediated gene silencing, also known as post-transcriptional gene silencing (PTGS), a mechanism of plant viral defense that limits the accumulation of viral RNAs. This chain is Movement and silencing protein TGBp1, found in Brassica campestris (Field mustard).